Consider the following 209-residue polypeptide: Glutathione S-transferase 1, isoform D (209 aa).

Residues 1–80 (MDFYYLPGSA…YLAEKYGKDD (80 aa)) form the GST N-terminal domain. Glutathione-binding positions include serine 9, 50–52 (HCI), and 64–66 (ESR). Positions 86–207 (DPQKRAVVNQ…AGADEFKAKF (122 aa)) constitute a GST C-terminal domain.

The protein belongs to the GST superfamily. Theta family. In terms of assembly, homodimer.

The enzyme catalyses RX + glutathione = an S-substituted glutathione + a halide anion + H(+). The catalysed reaction is 1,1,1-trichloro-2,2-bis(4-chlorophenyl)ethane = 1,1-dichloro-2,2-bis(4-chlorophenyl)ethylene + chloride + H(+). Inhibited by S-hexylglutathione. Its function is as follows. Conjugation of reduced glutathione to a wide number of exogenous and endogenous hydrophobic electrophiles. Has DDT dehydrochlorinase activity. This chain is Glutathione S-transferase 1, isoform D (GstD1), found in Anopheles gambiae (African malaria mosquito).